A 647-amino-acid chain; its full sequence is RalA-binding protein 1 (647 aa).

2 disordered regions span residues 1–151 (MTEC…EKKC) and 163–186 (WKEKKKKKKPTQEPEVPQTDAPSL). N-acetylthreonine is present on Thr2. Residues 24–33 (LTRTPSSEEI) are compositionally biased toward polar residues. A phosphoserine mark is found at Ser29, Ser30, and Ser34. Residue Thr44 is modified to Phosphothreonine. 2 positions are modified to phosphoserine: Ser48 and Ser62. Basic and acidic residues predominate over residues 52–68 (DILHEPPDIVSDDEKDH). Residue 69–74 (GKKKGK) coordinates ATP. Residues 69–79 (GKKKGKFKKKE) are compositionally biased toward basic residues. Ser92 and Ser93 each carry phosphoserine. Residues 102 to 118 (KMKRSKGIHVFKKPSFS) show a composition bias toward basic residues. Residues 102 to 119 (KMKRSKGIHVFKKPSFSK) are nuclear localization signal. Over residues 119 to 151 (KKKEKDFKIKEKPKEEKHKEEKHKEEKHKEKKC) the composition is skewed to basic and acidic residues. The mediates association with membranes and could form transmembrane domains stretch occupies residues 154–219 (FTAADVVKQW…PAVFRECVDY (66 aa)). The 189-residue stretch at 192-380 (APFADAVERT…VLLKQVTRPL (189 aa)) folds into the Rho-GAP domain. The interval 403-499 (RRQEFLLNCL…LTEQEELLAM (97 aa)) is mediates interaction with RALA and RALB. An ATP-binding site is contributed by 418–425 (GGIKDFSK). 2 positions are modified to phosphoserine: Ser461 and Ser463. Positions 500-647 (EQFLRRQIAS…PSKDRKETPI (148 aa)) are mediates interaction with REPS1 and REPS2. Disordered stretches follow at residues 525–550 (QSRQHGRSETEEYSSDSESESEDEEE) and 601–647 (EQQL…ETPI). Residues 535–550 (EEYSSDSESESEDEEE) show a composition bias toward acidic residues. The span at 628–647 (RAAKEQAKPSPSKDRKETPI) shows a compositional bias: basic and acidic residues. At Ser637 the chain carries Phosphoserine.

In terms of assembly, interacts with the GTP-bound form of RALA (via effector domain); during mitosis, recruits RALBP1 to the mitochondrion where it promotes DNM1L phosphorylation and mitochondrial fission. Interacts with DNM1L; mediates its mitotic kinase cyclin B-CDK1-mediated phosphorylation during mitosis to promote mitochondrial fission. Interacts with the mitotic kinase cyclin B-CDK1 during mitosis. Interacts with the GTP-bound form of RALB (via effector domain). Interacts with REPS1; the interaction is direct and does not affect RALA-binding nor GTPase activator activity of RALBP1. Interacts with REPS2; the interaction is direct and does not affect RALA-binding nor GTPase activator activity of RALBP1. Interacts with EPN1, NUMB and TFAP2A during interphase and mitosis. Interacts with AP2M1; as part of the AP2 complex. Interacts with CDC42. Interacts with RAC1. Tyrosine-phosphorylated upon stimulation of cells with EGF. In terms of processing, may undergo proteolytic cleavage to give peptides which reassemble to form a transporter complex. Ubiquitously expressed.

It localises to the cell membrane. It is found in the cytoplasm. The protein localises to the cytosol. Its subcellular location is the cytoskeleton. The protein resides in the spindle pole. It localises to the nucleus. It is found in the mitochondrion. It catalyses the reaction an S-substituted glutathione(in) + ATP + H2O = an S-substituted glutathione(out) + ADP + phosphate + H(+). The enzyme catalyses ATP + H2O + xenobioticSide 1 = ADP + phosphate + xenobioticSide 2.. The catalysed reaction is leukotriene C4(in) + ATP + H2O = leukotriene C4(out) + ADP + phosphate + H(+). Multifunctional protein that functions as a downstream effector of RALA and RALB. As a GTPase-activating protein/GAP can inactivate CDC42 and RAC1 by stimulating their GTPase activity. As part of the Ral signaling pathway, may also regulate ligand-dependent EGF and insulin receptors-mediated endocytosis. During mitosis, may act as a scaffold protein in the phosphorylation of EPSIN/EPN1 by the mitotic kinase cyclin B-CDK1, preventing endocytosis during that phase of the cell cycle. During mitosis, also controls mitochondrial fission as an effector of RALA. Recruited to mitochondrion by RALA, acts as a scaffold to foster the mitotic kinase cyclin B-CDK1-mediated phosphorylation and activation of DNM1L. Functionally, could also function as a primary ATP-dependent active transporter for glutathione conjugates of electrophiles. May also actively catalyze the efflux of a wide range of substrates including xenobiotics like doxorubicin (DOX) contributing to cell multidrug resistance. This is RalA-binding protein 1 from Rattus norvegicus (Rat).